Here is a 210-residue protein sequence, read N- to C-terminus: Acetoin utilization protein AcuA (210 aa).

Residues 20 to 161 (LIEGPVSPED…YRKIMEKMMN (142 aa)) form the N-acetyltransferase domain.

This sequence belongs to the acetyltransferase family. As to quaternary structure, monomer.

It functions in the pathway ketone degradation; acetoin degradation. With respect to regulation, activity is sensitive to salt concentration, a high concentration of KCL (500 mM) is needed for complete inactivation. Part of the acuABC operon, which is possibly involved in the breakdown of acetoin and butanediol. Acts as an acetyltransferase inactivating acetyl-CoA synthetase AcsA via acetylation at a Lys residue. The protein is Acetoin utilization protein AcuA (acuA) of Bacillus subtilis (strain 168).